Consider the following 374-residue polypeptide: Tetraacyldisaccharide 4'-kinase (374 aa).

66–73 (TAGGTGKT) serves as a coordination point for ATP.

This sequence belongs to the LpxK family.

The catalysed reaction is a lipid A disaccharide + ATP = a lipid IVA + ADP + H(+). Its pathway is glycolipid biosynthesis; lipid IV(A) biosynthesis; lipid IV(A) from (3R)-3-hydroxytetradecanoyl-[acyl-carrier-protein] and UDP-N-acetyl-alpha-D-glucosamine: step 6/6. In terms of biological role, transfers the gamma-phosphate of ATP to the 4'-position of a tetraacyldisaccharide 1-phosphate intermediate (termed DS-1-P) to form tetraacyldisaccharide 1,4'-bis-phosphate (lipid IVA). The polypeptide is Tetraacyldisaccharide 4'-kinase (Syntrophus aciditrophicus (strain SB)).